Here is a 269-residue protein sequence, read N- to C-terminus: Photosystem I assembly factor PSA3, chloroplastic (269 aa).

Residues methionine 1–valine 37 constitute a chloroplast transit peptide.

It is found in the plastid. Its subcellular location is the chloroplast thylakoid membrane. Nuclear genome-encoded factor required for the accumulation of photosystem I (PSI). Functions as a PSI biogenesis factor. Cooperates with PYG7 to promote the stable assembly of PSI in the thylakoid membrane. May target primarily the PsaC subunit. Does not seem to be required for the expression of chloroplast genes encoding PSI subunits. This chain is Photosystem I assembly factor PSA3, chloroplastic, found in Zea mays (Maize).